A 208-amino-acid chain; its full sequence is RxLR effector protein Avr1 (208 aa).

The N-terminal stretch at 1–22 (MGLMHRVLLLATFALLCMHAKA) is a signal peptide. The RxLR-dEER motif lies at 41–54 (RQLRTATMSDDEAR). The W1-motif stretch occupies residues 70 to 92 (KIESWIQNKVTDDFVLSELKLVR). The interval 93 to 110 (LPGTSLADDPNFKLFQKF) is linker region ln1. Positions 111 to 136 (KIGGWLEEKATTTKAWENLGLDSLPF) are W2-motif. Residues 137-157 (DQVSKIDEFKTYTQYVTVLNK) form a Y-motif region. The segment at 158–170 (KASKLDIDQWHGL) is linker region ln2. Residues 170–208 (LLSGGSPEELMAKAMILRTLGRDVLERRVMLGGHVVVPF) form a T-region region.

Belongs to the RxLR effector family. In terms of assembly, interacts with host exocyst component Sec5.

It localises to the secreted. It is found in the host cytoplasm. The protein resides in the host nucleus. Its subcellular location is the host peroxisome. Functionally, secreted effector that acts as an elicitor of hypersensitive response (HR) specifically on plants carrying defense protein R1, through its interaction with this protein. Also acts as a virulence factor that promotes colonization and suppresses cell death induced by CRN2 as well as callose deposition, a hallmark of basal defense. Interacts with host exocyst component Sec5 and thereby disturbs vesicle trafficking, a cellular process that is important for basal defense. By targeting and stabilizing Sec5 in the cytoplasm, the exocyst complex is thus out of balance and not able to mediate the focal secretion of PR-1 and callose. This is RxLR effector protein Avr1 from Phytophthora infestans (strain T30-4) (Potato late blight agent).